Here is a 402-residue protein sequence, read N- to C-terminus: Plasminogen activator inhibitor 1 (402 aa).

The first 22 residues, 1–22, serve as a signal peptide directing secretion; it reads MQMSSALACLILGLVLVSGKGF. Residues asparagine 232, asparagine 288, and asparagine 352 are each glycosylated (N-linked (GlcNAc...) asparagine).

This sequence belongs to the serpin family. As to quaternary structure, forms a heterodimer with TMPRSS7. Interacts with VTN. Binds LRP1B; binding is followed by internalization and degradation. Interacts with PPP1CB. In complex with PLAU/uPA, interacts with PLAUR/uPAR. Interacts with SORL1 and LRP1, either alone or in complex with PLAU; these interactions are abolished in the presence of LRPAP1/RAP. The ternary complex composed of PLAUR-PLAU-PAI1 also interacts with SORL1. Interacts with PLAT/tPA. Also interacts with SORL1, when complexed to PLAT/tPA.

It is found in the secreted. Functionally, serine protease inhibitor. Inhibits TMPRSS7. Is a primary inhibitor of tissue-type plasminogen activator (PLAT) and urokinase-type plasminogen activator (PLAU). As PLAT inhibitor, it is required for fibrinolysis down-regulation and is responsible for the controlled degradation of blood clots. As PLAU inhibitor, it is involved in the regulation of cell adhesion and spreading. Acts as a regulator of cell migration, independently of its role as protease inhibitor. It is required for stimulation of keratinocyte migration during cutaneous injury repair. Involved in cellular and replicative senescence. Plays a role in alveolar type 2 cells senescence in the lung. Is involved in the regulation of cementogenic differentiation of periodontal ligament stem cells, and regulates odontoblast differentiation and dentin formation during odontogenesis. In Mus musculus (Mouse), this protein is Plasminogen activator inhibitor 1 (Serpine1).